A 196-amino-acid chain; its full sequence is Pyridoxine/pyridoxamine 5'-phosphate oxidase (196 aa).

Residues arginine 44–lysine 49, tyrosine 59–threonine 60, arginine 65, lysine 66, and glutamine 88 contribute to the FMN site. Position 49 (lysine 49) interacts with substrate. Substrate-binding residues include tyrosine 106, arginine 110, and serine 114. Residues glutamine 123 to serine 124 and tryptophan 169 each bind FMN. Residue arginine 175–histidine 177 coordinates substrate. Residue arginine 179 coordinates FMN.

This sequence belongs to the pyridoxamine 5'-phosphate oxidase family. In terms of assembly, homodimer. It depends on FMN as a cofactor.

It carries out the reaction pyridoxamine 5'-phosphate + O2 + H2O = pyridoxal 5'-phosphate + H2O2 + NH4(+). The catalysed reaction is pyridoxine 5'-phosphate + O2 = pyridoxal 5'-phosphate + H2O2. It functions in the pathway cofactor metabolism; pyridoxal 5'-phosphate salvage; pyridoxal 5'-phosphate from pyridoxamine 5'-phosphate: step 1/1. It participates in cofactor metabolism; pyridoxal 5'-phosphate salvage; pyridoxal 5'-phosphate from pyridoxine 5'-phosphate: step 1/1. In terms of biological role, catalyzes the oxidation of either pyridoxine 5'-phosphate (PNP) or pyridoxamine 5'-phosphate (PMP) into pyridoxal 5'-phosphate (PLP). This is Pyridoxine/pyridoxamine 5'-phosphate oxidase from Alkalilimnicola ehrlichii (strain ATCC BAA-1101 / DSM 17681 / MLHE-1).